Consider the following 276-residue polypeptide: Probable endonuclease 4 (276 aa).

Zn(2+) is bound by residues His-70, His-108, Glu-143, Asp-176, His-179, His-210, Asp-223, His-225, and Glu-255.

This sequence belongs to the AP endonuclease 2 family. The cofactor is Zn(2+).

The catalysed reaction is Endonucleolytic cleavage to 5'-phosphooligonucleotide end-products.. Endonuclease IV plays a role in DNA repair. It cleaves phosphodiester bonds at apurinic or apyrimidinic (AP) sites, generating a 3'-hydroxyl group and a 5'-terminal sugar phosphate. In Mesomycoplasma hyopneumoniae (strain 7448) (Mycoplasma hyopneumoniae), this protein is Probable endonuclease 4.